Here is a 344-residue protein sequence, read N- to C-terminus: Uroporphyrinogen decarboxylase (344 aa).

Substrate-binding positions include 27 to 31 (RQAGR), phenylalanine 46, aspartate 77, tyrosine 153, threonine 208, and histidine 324.

The protein belongs to the uroporphyrinogen decarboxylase family. Homodimer.

The protein resides in the cytoplasm. The enzyme catalyses uroporphyrinogen III + 4 H(+) = coproporphyrinogen III + 4 CO2. It functions in the pathway porphyrin-containing compound metabolism; protoporphyrin-IX biosynthesis; coproporphyrinogen-III from 5-aminolevulinate: step 4/4. Functionally, catalyzes the decarboxylation of four acetate groups of uroporphyrinogen-III to yield coproporphyrinogen-III. In Bradyrhizobium diazoefficiens (strain JCM 10833 / BCRC 13528 / IAM 13628 / NBRC 14792 / USDA 110), this protein is Uroporphyrinogen decarboxylase.